We begin with the raw amino-acid sequence, 215 residues long: Glutaredoxin 2 (215 aa).

The GST N-terminal domain maps to 1 to 77; sequence MKLYIYDHCP…YVDKLDGKPL (77 aa). A disulfide bridge links cysteine 9 with cysteine 12.

Belongs to the glutaredoxin family.

In terms of biological role, involved in reducing some disulfides in a coupled system with glutathione reductase. Does not act as hydrogen donor for ribonucleotide reductase. The sequence is that of Glutaredoxin 2 (grxB) from Escherichia coli O157:H7.